A 352-amino-acid chain; its full sequence is Putative hetero-Diels-Alderase (352 aa).

A signal peptide spans 1-20; sequence MRYHLSALVLVFTAFRETLT. 6 N-linked (GlcNAc...) asparagine glycosylation sites follow: Asn26, Asn41, Asn47, Asn135, Asn211, and Asn310.

The protein belongs to the eupF Diels-Alderase family.

The protein operates within secondary metabolite biosynthesis; terpenoid biosynthesis. Functionally, putative hetero-Diels-Alderase; part of the gene cluster that mediates the biosynthesis of eupenifeldin, a bistropolone meroterpenoid that acts as an antitumor agent. The first step of eupenifeldin biosynthesis is the biosynthesis of 3-methylorcinaldehyde performed by the non-reducing polyketide synthase eupA. Oxidative dearomatization of 3-methylorcinaldehyde likely catalyzed by the FAD-dependent monooxygenase eupB is followed by oxidative ring expansion by the 2-oxoglutarate-dependent dioxygenase eupC to provide the first tropolone metabolite, tropolone stipitaldehyde. In parallel, generation of sesquiterpene alpha-humulene from farnesylpyrophosphate (FPP) is catalyzed by the terpene cyclase eupE. The cytochrome P450 monooxygenase eupD then hydroxylates humulene to humulenol. The putative Diels-Alderase eupF probably catalyzes the formation of the tropolone-humulene skeleton by linking humulenol and the polyketide moiety. The short-chain dehydrogenase/reductase eupG and the flavin-dependent monooxygenase eupH are also essential for eupenifeldin biosynthesis and are likely the additional decorating enzymes of the tropolone-humulene skeleton to produce final eupenifeldin or derivatives. The sequence is that of Putative hetero-Diels-Alderase from Phoma sp.